Consider the following 475-residue polypeptide: UDP-N-acetylmuramate--L-alanine ligase (475 aa).

125–131 provides a ligand contact to ATP; sequence GTHGKTT.

Belongs to the MurCDEF family.

Its subcellular location is the cytoplasm. It carries out the reaction UDP-N-acetyl-alpha-D-muramate + L-alanine + ATP = UDP-N-acetyl-alpha-D-muramoyl-L-alanine + ADP + phosphate + H(+). It functions in the pathway cell wall biogenesis; peptidoglycan biosynthesis. Its function is as follows. Cell wall formation. In Actinobacillus pleuropneumoniae serotype 5b (strain L20), this protein is UDP-N-acetylmuramate--L-alanine ligase.